A 327-amino-acid chain; its full sequence is Glycerol-3-phosphate dehydrogenase [NAD(P)+] (327 aa).

NADPH-binding residues include phenylalanine 13, arginine 34, and lysine 107. Sn-glycerol 3-phosphate is bound by residues lysine 107 and glycine 135. An NADPH-binding site is contributed by alanine 139. Residues lysine 190, aspartate 243, serine 253, arginine 254, and asparagine 255 each contribute to the sn-glycerol 3-phosphate site. The active-site Proton acceptor is the lysine 190. Arginine 254 lines the NADPH pocket. Residues valine 276 and glutamate 277 each coordinate NADPH.

It belongs to the NAD-dependent glycerol-3-phosphate dehydrogenase family.

The protein localises to the cytoplasm. The enzyme catalyses sn-glycerol 3-phosphate + NAD(+) = dihydroxyacetone phosphate + NADH + H(+). The catalysed reaction is sn-glycerol 3-phosphate + NADP(+) = dihydroxyacetone phosphate + NADPH + H(+). It participates in membrane lipid metabolism; glycerophospholipid metabolism. Catalyzes the reduction of the glycolytic intermediate dihydroxyacetone phosphate (DHAP) to sn-glycerol 3-phosphate (G3P), the key precursor for phospholipid synthesis. The sequence is that of Glycerol-3-phosphate dehydrogenase [NAD(P)+] from Rhizobium etli (strain ATCC 51251 / DSM 11541 / JCM 21823 / NBRC 15573 / CFN 42).